The chain runs to 1390 residues: DNA-directed RNA polymerase subunit beta (1390 aa).

The protein belongs to the RNA polymerase beta chain family. In terms of assembly, the RNAP catalytic core consists of 2 alpha, 1 beta, 1 beta' and 1 omega subunit. When a sigma factor is associated with the core the holoenzyme is formed, which can initiate transcription.

The catalysed reaction is RNA(n) + a ribonucleoside 5'-triphosphate = RNA(n+1) + diphosphate. DNA-dependent RNA polymerase catalyzes the transcription of DNA into RNA using the four ribonucleoside triphosphates as substrates. The polypeptide is DNA-directed RNA polymerase subunit beta (Rhodopseudomonas palustris (strain HaA2)).